A 480-amino-acid polypeptide reads, in one-letter code: Sestrin-2 (480 aa).

At M1 the chain carries N-acetylmethionine. The disordered stretch occupies residues 20-43 (RGGVAGPETREEHREGQARRGSRG). Basic and acidic residues predominate over residues 27–37 (ETREEHREGQA). The tract at residues 66–239 (GLEALMSSGR…APSPPSEQGT (174 aa)) is N-terminal domain; mediates the alkylhydroperoxide reductase activity. C125 serves as the catalytic Cysteine sulfenic acid (-SOH) intermediate. Residue K175 forms a Glycyl lysine isopeptide (Lys-Gly) (interchain with G-Cter in ubiquitin) linkage. 2 disordered regions span residues 221–251 (DAEGSPASQAPSPPSEQGTPPSGDPLNNSGG) and 272–291 (LLRDEGASQEEMENRFELEK). Over residues 223–238 (EGSPASQAPSPPSEQG) the composition is skewed to low complexity. S249 is subject to Phosphoserine. Residues 308–480 (PHPDILCFVE…ALRAITRYMT (173 aa)) are C-terminal domain; mediates TORC1 regulation. Residues 374–377 (TYNT), T386, and E451 each bind L-leucine.

This sequence belongs to the sestrin family. Interacts with the GATOR2 complex which is composed of MIOS, SEC13, SEH1L, WDR24 and WDR59; the interaction is negatively regulated by leucine. Conveys leucine availability via direct interaction with SEH1L and WDR24 components of the GATOR2 complex. Interacts with RRAGA, RRAGB, RRAGC and RRAGD; may function as a guanine nucleotide dissociation inhibitor for RRAGs and regulate them. May interact with the TORC2 complex. Interacts with KEAP1, RBX1, SQSTM and ULK1; to regulate the degradation of KEAP1. May also associate with the complex composed of TSC1, TSC2 and the AMP-responsive protein kinase/AMPK to regulate TORC1 signaling. May interact with PRDX1. In terms of processing, phosphorylated by ULK1 at multiple sites. Post-translationally, ubiquitinated at Lys-175 by RNF167 via 'Lys-63'-linked polyubiquitination in response to leucine deprivation: ubiquitination promotes SESN2-interaction with the GATOR2 complex, leading to inhibit the TORC1 signaling pathway. Deubiquitinated at Lys-175 by STAMBPL1, promoting the TORC1 signaling pathway. Ubiquitinated by RNF186; ubiquitination mediates proteasomal degradation. As to expression, detected in heart, liver and skeletal muscles (at protein level).

It is found in the cytoplasm. It carries out the reaction a hydroperoxide + L-cysteinyl-[protein] = S-hydroxy-L-cysteinyl-[protein] + an alcohol. Its function is as follows. Functions as an intracellular leucine sensor that negatively regulates the mTORC1 signaling pathway through the GATOR complex. In absence of leucine, binds the GATOR subcomplex GATOR2 and prevents mTORC1 signaling. Binding of leucine to SESN2 disrupts its interaction with GATOR2 thereby activating the TORC1 signaling pathway. This stress-inducible metabolic regulator also plays a role in protection against oxidative and genotoxic stresses. May negatively regulate protein translation in response to endoplasmic reticulum stress, via mTORC1. May positively regulate the transcription by NFE2L2 of genes involved in the response to oxidative stress by facilitating the SQSTM1-mediated autophagic degradation of KEAP1. May also mediate TP53 inhibition of TORC1 signaling upon genotoxic stress. Moreover, may prevent the accumulation of reactive oxygen species (ROS) through the alkylhydroperoxide reductase activity born by the N-terminal domain of the protein. Was originally reported to contribute to oxidative stress resistance by reducing PRDX1. However, this could not be confirmed. The sequence is that of Sestrin-2 from Mus musculus (Mouse).